We begin with the raw amino-acid sequence, 417 residues long: Phosphoglycerate kinase (417 aa).

(2R)-3-phosphoglycerate-binding residues include Val23, Asp24, Phe25, Asn26, Gln39, Arg40, Ser63, His64, Gly66, Arg67, Leu122, Arg123, His170, and Arg171. A Phosphoserine modification is found at Ser203. Residue Gly214 participates in ADP binding. Gly214 contacts CDP. The AMP site is built by Ala215 and Lys216. Residue Ala215 participates in ATP binding. Ala215 is a Mg(2+) binding site. Asp219 lines the CDP pocket. A Mg(2+)-binding site is contributed by Asp219. Lys220 is a binding site for AMP. Lys220 lines the ATP pocket. Residue Gly238 participates in ADP binding. Residue Gly238 coordinates CDP. AMP is bound by residues Ala239 and Gly313. Residues Ala239 and Gly313 each contribute to the ATP site. Residues Gly338 and Phe343 each contribute to the CDP site. Residue Phe343 coordinates ADP. Glu344 contacts AMP. Residues Glu344, Asp375, and Thr376 each contribute to the ATP site. A Mg(2+)-binding site is contributed by Asp375.

The protein belongs to the phosphoglycerate kinase family. In terms of assembly, monomer. Mg(2+) is required as a cofactor. Post-translationally, dephosphorylated by PTC1 and PTC2 at Ser-203; the protein is cytosolic when dephosphorylated.

It localises to the cytoplasm. Its subcellular location is the cytosol. The protein resides in the mitochondrion. The enzyme catalyses (2R)-3-phosphoglycerate + ATP = (2R)-3-phospho-glyceroyl phosphate + ADP. It functions in the pathway carbohydrate degradation; glycolysis; pyruvate from D-glyceraldehyde 3-phosphate: step 2/5. Catalyzes one of the two ATP producing reactions in the glycolytic pathway via the reversible conversion of 1,3-diphosphoglycerate to 3-phosphoglycerate. Both L- and D- forms of purine and pyrimidine nucleotides can be used as substrates, but the activity is much lower on pyrimidines. Negatively regulates the biosynthesis of acetyl-CoA from pyruvate in the mitochondrion and consequently also attenuates aflatoxin production. In Aspergillus flavus (strain ATCC 200026 / FGSC A1120 / IAM 13836 / NRRL 3357 / JCM 12722 / SRRC 167), this protein is Phosphoglycerate kinase.